The primary structure comprises 724 residues: ATPase family protein 2 homolog (724 aa).

Residues 281–287 (PGSGKTL) and 503–508 (GCSKTL) contribute to the ATP site.

The protein belongs to the AAA ATPase family. AFG2 subfamily. In terms of assembly, homohexamer; ATP binding induces oligomerization. Forms a ring-shaped particle of about 12 nm diameter, that displays 6-fold radial symmetry. Interacts (via N-terminus) with kinase air-2; the interaction is direct and inhibits air-2 kinase activity in an ATPase-dependent manner.

The protein resides in the cytoplasm. It carries out the reaction ATP + H2O = ADP + phosphate + H(+). Its function is as follows. ATP-dependent chaperone which uses the energy provided by ATP hydrolysis to generate mechanical force to disassemble protein complexes. Required for various steps of embryonic mitosis including centrosome duplication, spindle assembly, ER dynamics and cell cycle progression. Regulates the stability and activity of kinase air-2, a component of the chromosomal passenger complex (CPC). Inhibits air-2 kinase activity from metaphase to late telophase and negatively regulates air-2 stability during mitotic exit. Controls ER transition into sheet-like structures at the onset of mitosis, possibly by regulating homotypic membrane fusion. The chain is ATPase family protein 2 homolog from Caenorhabditis elegans.